Reading from the N-terminus, the 161-residue chain is Allophycocyanin subunit alpha-B (161 aa).

Asparagine 71 carries the post-translational modification N4-methylasparagine. (2R,3E)-phycocyanobilin is bound at residue cysteine 81.

It belongs to the phycobiliprotein family. As to quaternary structure, heterodimer of an alpha-B and a beta chain forming AP-B. Post-translationally, contains one covalently linked bilin chromophore. The chromophore is added by phycocyanobilin lyase CpcUS.

Its subcellular location is the cellular thylakoid membrane. A variant alpha-allophycocyanin (AP) which forms a complex with beta-AP with maximum absorption at approximately 670 nanometers. It is an important phycobilisome terminal emitter involved in energy transfer to photosystem I. This Picosynechococcus sp. (strain ATCC 27264 / PCC 7002 / PR-6) (Agmenellum quadruplicatum) protein is Allophycocyanin subunit alpha-B (apcD).